We begin with the raw amino-acid sequence, 374 residues long: UPF0754 membrane protein SAS1767 (374 aa).

The next 2 membrane-spanning stretches (helical) occupy residues 4 to 24 (LFII…TNVI) and 354 to 374 (SLGF…AIFV).

This sequence belongs to the UPF0754 family.

The protein resides in the cell membrane. The protein is UPF0754 membrane protein SAS1767 of Staphylococcus aureus (strain MSSA476).